Reading from the N-terminus, the 559-residue chain is Methionine--tRNA ligase (559 aa).

The 'HIGH' region signature appears at 10–20; the sequence is PYINAVPHLGT. Cys-141, Cys-144, Cys-154, and Cys-157 together coordinate Zn(2+). The short motif at 331–335 is the 'KMSKS' region element; the sequence is KFSKS. Lys-334 lines the ATP pocket.

Belongs to the class-I aminoacyl-tRNA synthetase family. MetG type 1 subfamily. Zn(2+) serves as cofactor.

The protein localises to the cytoplasm. The catalysed reaction is tRNA(Met) + L-methionine + ATP = L-methionyl-tRNA(Met) + AMP + diphosphate. Its function is as follows. Is required not only for elongation of protein synthesis but also for the initiation of all mRNA translation through initiator tRNA(fMet) aminoacylation. The protein is Methionine--tRNA ligase of Korarchaeum cryptofilum (strain OPF8).